The following is a 126-amino-acid chain: MEFEFIKNTLLGEYAVRCNMEHQIVGRWLQEEIGQDLAKLKHVLTLIDKAEQSPAQEFLWTGREISLLVQGDEITVQENALAYESEHELETDFALYDSESIAACGREDFVALLTQWQSFIQNQGRF.

It belongs to the UPF0231 family.

This chain is UPF0231 protein VC0395_A0134/VC395_0622, found in Vibrio cholerae serotype O1 (strain ATCC 39541 / Classical Ogawa 395 / O395).